We begin with the raw amino-acid sequence, 227 residues long: Large ribosomal subunit protein uL3 (227 aa).

Residues 129 to 154 (GMQPVSHGQSDRTRSRGSSGAQGPQK) are disordered.

This sequence belongs to the universal ribosomal protein uL3 family. In terms of assembly, part of the 50S ribosomal subunit. Forms a cluster with proteins L14 and L19.

Its function is as follows. One of the primary rRNA binding proteins, it binds directly near the 3'-end of the 23S rRNA, where it nucleates assembly of the 50S subunit. This is Large ribosomal subunit protein uL3 from Endomicrobium trichonymphae.